The following is a 69-amino-acid chain: Consomatin Be1 (69 aa).

An N-terminal signal peptide occupies residues 1–22 (MEMAYWVMVMMMVWITAPLSEG). The propeptide occupies 23-57 (GKLNDVIRALAPDDVTPQFILRSLISRRRSDSDVR). Residue glutamate 58 is modified to 4-carboxyglutamate. The cysteines at positions 62 and 67 are disulfide-linked. Tryptophan 64 is modified (D-tryptophan). Proline 68 and proline 69 each carry 4-hydroxyproline.

It belongs to the conotoxin C superfamily. Consomatin family. In terms of tissue distribution, expressed by the venom duct.

The protein resides in the secreted. Moderately activates human somatostatin receptors (SSTR) with a preferential activation of SSTR1 and SSTR4. In vivo, does not cause behavioral changes in mice within a few minutes of intracranial injection, but causes a progressive loss of movement thereafter. Four to five hours after injection, mice recover, even with the highest dose tested. Shows antinociception and antihyperalgesia activities in two mouse models of acute pain, most probably by acting outside the central nervous system. The polypeptide is Consomatin Be1 (Conus betulinus (Beech cone)).